A 398-amino-acid polypeptide reads, in one-letter code: Succinate--CoA ligase [ADP-forming] subunit beta (398 aa).

Residues 9–253 enclose the ATP-grasp domain; that stretch reads KQVLAKYGVA…ESEEDPAELE (245 aa). Residues Lys-46, 53 to 55, Glu-108, Cys-111, and Glu-116 contribute to the ATP site; that span reads GRG. The Mg(2+) site is built by Asn-208 and Asp-222. Residues Asn-273 and 330–332 contribute to the substrate site; that span reads GIM.

This sequence belongs to the succinate/malate CoA ligase beta subunit family. Heterotetramer of two alpha and two beta subunits. Requires Mg(2+) as cofactor.

The enzyme catalyses succinate + ATP + CoA = succinyl-CoA + ADP + phosphate. It carries out the reaction GTP + succinate + CoA = succinyl-CoA + GDP + phosphate. Its pathway is carbohydrate metabolism; tricarboxylic acid cycle; succinate from succinyl-CoA (ligase route): step 1/1. Succinyl-CoA synthetase functions in the citric acid cycle (TCA), coupling the hydrolysis of succinyl-CoA to the synthesis of either ATP or GTP and thus represents the only step of substrate-level phosphorylation in the TCA. The beta subunit provides nucleotide specificity of the enzyme and binds the substrate succinate, while the binding sites for coenzyme A and phosphate are found in the alpha subunit. The sequence is that of Succinate--CoA ligase [ADP-forming] subunit beta from Paramagnetospirillum magneticum (strain ATCC 700264 / AMB-1) (Magnetospirillum magneticum).